Consider the following 487-residue polypeptide: MTPRRSLSSSDSNDKSPSVSVVAKKARSESVEGIEKKTTPGRVKKIRSEVCTTIVKAGEFDSVALRKVNSLPSPNSEKSDTKTEQEVTIIENSKIPEEVKEFGVCQEMIVSAKSNENEQIDNGDQEIGDQDDYEEDGDEEEEREVEKKSVDVKEINVAKENRVGGVEIKKFSQFQNRTSPSPSSVRKISPPVIKRATSVYSAPPNSTSSTDRFAEQEDNFTHSQSKLQSLVDLVMWRDVSRSTLVFGFGTFLIISSSYANDLNFSFISVVAYMGLIYLGLMFVLKSLIHRGMVEEERHKVVGVREEDVKRMLRLIMPYLNESLHQLRALFSGDPSTTLKMGVVLFVLARCGSSITLWNLAKFGFLGAFTIPKIFISYSTHFSAYGNFWMRRFRDAWESCNHKKAVALALFTLVWNLSSVTARVWAAFMLLVAFRYYQHKMIWTTDQADDDEDDNEEEEAEEEKEQVPPKHKRAPPHMMMPNKLKKIS.

Residues 1 to 22 (MTPRRSLSSSDSNDKSPSVSVV) are compositionally biased toward low complexity. 3 disordered regions span residues 1–43 (MTPR…PGRV), 65–86 (LRKV…TEQE), and 113–149 (KSNE…EKKS). Basic and acidic residues predominate over residues 26–38 (ARSESVEGIEKKT). Positions 118-143 (EQIDNGDQEIGDQDDYEEDGDEEEER) are enriched in acidic residues. The Reticulon domain occupies 230–419 (LVDLVMWRDV…FTLVWNLSSV (190 aa)). 4 helical membrane-spanning segments follow: residues 242-262 (STLV…ANDL), 264-284 (FSFI…MFVL), 354-374 (ITLW…PKIF), and 413-433 (VWNL…LVAF). Acidic residues predominate over residues 446–463 (QADDDEDDNEEEEAEEEK). The segment at 446–487 (QADDDEDDNEEEEAEEEKEQVPPKHKRAPPHMMMPNKLKKIS) is disordered.

Its subcellular location is the endoplasmic reticulum membrane. In Arabidopsis thaliana (Mouse-ear cress), this protein is Reticulon-like protein B21 (RTNLB21).